The chain runs to 102 residues: Neuropeptide F (102 aa).

The N-terminal stretch at 1-29 (MSNTMRCILIVCVALTLIAAGCNVEASNS) is a signal peptide. Residues 30-32 (RPP) constitute a propeptide that is removed on maturation. Phenylalanine 62 bears the Phenylalanine amide mark. A propeptide spanning residues 66 to 102 (GGPLMEMLRNRELENNMAKSINSGGELIRALDEEEVF) is cleaved from the precursor.

This sequence belongs to the NPY family.

The protein resides in the secreted. Its function is as follows. An integral part of the sensory system that mediates food signaling, providing the neural basis for the regulation of food response; coordinates larval foraging and social behavior changes during development. May have a hormonal role in females. The sequence is that of Neuropeptide F from Drosophila pseudoobscura pseudoobscura (Fruit fly).